Here is a 280-residue protein sequence, read N- to C-terminus: F420-dependent methylenetetrahydromethanopterin dehydrogenase (280 aa).

This sequence belongs to the MTD family.

The catalysed reaction is 5,10-methylenetetrahydromethanopterin + oxidized coenzyme F420-(gamma-L-Glu)(n) + 2 H(+) = 5,10-methenyl-5,6,7,8-tetrahydromethanopterin + reduced coenzyme F420-(gamma-L-Glu)(n). Its pathway is one-carbon metabolism; methanogenesis from CO(2); 5,10-methylene-5,6,7,8-tetrahydromethanopterin from 5,10-methenyl-5,6,7,8-tetrahydromethanopterin (coenzyme F420 route): step 1/1. Functionally, catalyzes the reversible reduction of methenyl-H(4)MPT(+) to methylene-H(4)MPT. The sequence is that of F420-dependent methylenetetrahydromethanopterin dehydrogenase from Methanocorpusculum labreanum (strain ATCC 43576 / DSM 4855 / Z).